Here is a 173-residue protein sequence, read N- to C-terminus: Large ribosomal subunit protein uL10 (173 aa).

The protein belongs to the universal ribosomal protein uL10 family. In terms of assembly, part of the ribosomal stalk of the 50S ribosomal subunit. The N-terminus interacts with L11 and the large rRNA to form the base of the stalk. The C-terminus forms an elongated spine to which L12 dimers bind in a sequential fashion forming a multimeric L10(L12)X complex.

Forms part of the ribosomal stalk, playing a central role in the interaction of the ribosome with GTP-bound translation factors. In Chloroherpeton thalassium (strain ATCC 35110 / GB-78), this protein is Large ribosomal subunit protein uL10.